The chain runs to 1992 residues: E3 ubiquitin-protein ligase TRIP12 (1992 aa).

Over residues 1 to 10 the composition is skewed to polar residues; it reads MSNRPNNNPG. Disordered stretches follow at residues 1 to 398, 797 to 817, and 938 to 1080; these read MSNR…DDSE, QRKPNPLANSNTSGYSESKKD, and SLLT…ASKD. The residue at position 2 (Ser-2) is an N-acetylserine. At Ser-12 the chain carries Phosphoserine. Residues 18-27 are compositionally biased toward polar residues; it reads RNTAGAQPQD. The span at 48–70 shows a compositional bias: basic and acidic residues; the sequence is DPDRANTSERQKTGQVPKKDNSR. 3 positions are modified to phosphoserine: Ser-77, Ser-85, and Ser-100. Residues 78–88 show a composition bias toward polar residues; it reads PDYNRTNSPSS. Residues 119–132 are compositionally biased toward polar residues; that stretch reads EQQLKSAQSPSTSK. Composition is skewed to low complexity over residues 154-166 and 175-216; these read SSCVKSGSGSEST and PTKL…SSTV. Lys-181 bears the N6-acetyllysine mark. The segment covering 280 to 290 has biased composition (polar residues); it reads PGSSKSETSKP. 2 positions are modified to phosphoserine: Ser-310 and Ser-312. A compositionally biased stretch (polar residues) spans 326-338; it reads QKTTGSCASTSRR. Positions 346-358 are enriched in basic and acidic residues; it reads GAAEARRQEKMAD. 2 stretches are compositionally biased toward polar residues: residues 360 to 371 and 803 to 812; these read ESNQEAVNSSAA and LANSNTSGYS. The WWE domain maps to 749-836; the sequence is MLKKGNAQNT…DPELAKSFIK (88 aa). Ser-942 carries the post-translational modification Phosphoserine. Residues 948–973 show a composition bias toward low complexity; the sequence is TNGSGSMGSTTSVSSGTATAATHAAA. Ser-991 and Ser-997 each carry phosphoserine. A compositionally biased stretch (basic residues) spans 1001–1014; it reads KRKRLPKRGPRRPK. Phosphoserine is present on Ser-1016. Residues 1017 to 1026 are compositionally biased toward basic and acidic residues; the sequence is PPRDDDKVDN. Residues 1029 to 1040 show a composition bias toward low complexity; it reads KSPTTTQSPKSS. Ser-1030 carries the post-translational modification Phosphoserine. Residues 1041–1062 show a composition bias toward polar residues; the sequence is FLASLNPKTWGRLSTQSNSNNI. A phosphoserine mark is found at Ser-1317, Ser-1322, Ser-1329, and Ser-1376. Phosphothreonine is present on Thr-1377. Disordered regions lie at residues 1407–1433 and 1568–1587; these read SNKDCVGGKRGRAQTAPTKTSPRNAKK and TNPEINQSDSQDSRVAPRLD. At Lys-1425 the chain carries N6-acetyllysine. Phosphoserine is present on Ser-1427. Positions 1496-1570 are K-box; sequence EIIPTSEFIN…AMQRLLDTNP (75 aa). The 108-residue stretch at 1885–1992 folds into the HECT domain; that stretch reads PDHGYTHDSR…REGQQSFHLS (108 aa). The active-site Glycyl thioester intermediate is the Cys-1959.

The protein belongs to the UPL family. K-HECT subfamily. In terms of assembly, interacts with MYC; leading to disrupt interaction with isoform p19ARF/ARF of CDKN2A. Interacts with TRADD; leading to disrupt interaction with isoform p19ARF/ARF of CDKN2A. Interacts with SMARCC1; leading to disrupt interaction with SMARCE1.

It localises to the nucleus. Its subcellular location is the nucleoplasm. It catalyses the reaction S-ubiquitinyl-[E2 ubiquitin-conjugating enzyme]-L-cysteine + [acceptor protein]-L-lysine = [E2 ubiquitin-conjugating enzyme]-L-cysteine + N(6)-ubiquitinyl-[acceptor protein]-L-lysine.. It functions in the pathway protein modification; protein ubiquitination. Functionally, E3 ubiquitin-protein ligase involved in ubiquitin fusion degradation (UFD) pathway and regulation of DNA repair. Part of the ubiquitin fusion degradation (UFD) pathway, a process that mediates ubiquitination of protein at their N-terminus, regardless of the presence of lysine residues in target proteins. Acts as a key regulator of DNA damage response by acting as a suppressor of RNF168, an E3 ubiquitin-protein ligase that promotes accumulation of 'Lys-63'-linked histone H2A and H2AX at DNA damage sites, thereby acting as a guard against excessive spreading of ubiquitinated chromatin at damaged chromosomes. In normal cells, mediates ubiquitination and degradation of isoform p19ARF/ARF of CDKN2A, a lysine-less tumor suppressor required for p53/TP53 activation under oncogenic stress. In cancer cells, however, isoform p19ARF/ARF and TRIP12 are located in different cell compartments, preventing isoform p19ARF/ARF ubiquitination and degradation. Does not mediate ubiquitination of isoform p16-INK4a of CDKN2A. Also catalyzes ubiquitination of NAE1 and SMARCE1, leading to their degradation. Ubiquitination and degradation of target proteins is regulated by interaction with proteins such as MYC, TRADD or SMARCC1, which disrupt the interaction between TRIP12 and target proteins. Mediates ubiquitination of ASXL1: following binding to N(6)-methyladenosine methylated DNA, ASXL1 is ubiquitinated by TRIP12, leading to its degradation and subsequent inactivation of the PR-DUB complex. The chain is E3 ubiquitin-protein ligase TRIP12 (TRIP12) from Homo sapiens (Human).